The chain runs to 115 residues: Large ribosomal subunit protein bL19 (115 aa).

It belongs to the bacterial ribosomal protein bL19 family.

Its function is as follows. This protein is located at the 30S-50S ribosomal subunit interface and may play a role in the structure and function of the aminoacyl-tRNA binding site. The polypeptide is Large ribosomal subunit protein bL19 (Bacillus velezensis (strain DSM 23117 / BGSC 10A6 / LMG 26770 / FZB42) (Bacillus amyloliquefaciens subsp. plantarum)).